Consider the following 221-residue polypeptide: Uracil-DNA glycosylase 1 (221 aa).

Residue D61 is the Proton acceptor of the active site.

This sequence belongs to the uracil-DNA glycosylase (UDG) superfamily. UNG family.

It is found in the cytoplasm. The enzyme catalyses Hydrolyzes single-stranded DNA or mismatched double-stranded DNA and polynucleotides, releasing free uracil.. In terms of biological role, excises uracil residues from the DNA which can arise as a result of misincorporation of dUMP residues by DNA polymerase or due to deamination of cytosine. The protein is Uracil-DNA glycosylase 1 of Listeria innocua serovar 6a (strain ATCC BAA-680 / CLIP 11262).